A 334-amino-acid polypeptide reads, in one-letter code: MTIIVTGAAGFIGSNIVKALNQRGITDIVAVDNLTKGEKFKNLAECEIAHYLDKHEFIRQVREHILPYQNIEAVFHQGACSDTMNHDGLYMMENNYQYTLDLLDWCQDERIPFLYASSAAVYGKGEIFREERELEKPLNVYGYSKFLFDQVLRRRMKEGLTAQVVGFRYFNVYGQHEQHKGRMASVAFHHFHQYREHGYVNLFGSNDGYGNGEQTRDFVSVEDVAKINLYFFDHPELSGIYNLGTGRSQQFNELAAAAVNACRAAEGKSELSLKELVEEELIRYIPFPDALKGKYQGFTQADITKLREAGYKEEFFDVKAGVNRYVKWMLENLA.

Residues 11 to 12 (FI), 32 to 33 (DN), K39, K54, 77 to 81 (QGACS), and N94 each bind NADP(+). Residue Y141 is the Proton acceptor of the active site. NADP(+) is bound at residue K145. N171 contacts substrate. Residues V172 and K180 each coordinate NADP(+). K180 acts as the Proton acceptor in catalysis. Substrate contacts are provided by residues R182, H189, 203–206 (FGSN), R216, and Y295.

This sequence belongs to the NAD(P)-dependent epimerase/dehydratase family. HldD subfamily. In terms of assembly, homopentamer. NADP(+) is required as a cofactor.

It carries out the reaction ADP-D-glycero-beta-D-manno-heptose = ADP-L-glycero-beta-D-manno-heptose. The protein operates within nucleotide-sugar biosynthesis; ADP-L-glycero-beta-D-manno-heptose biosynthesis; ADP-L-glycero-beta-D-manno-heptose from D-glycero-beta-D-manno-heptose 7-phosphate: step 4/4. Functionally, catalyzes the interconversion between ADP-D-glycero-beta-D-manno-heptose and ADP-L-glycero-beta-D-manno-heptose via an epimerization at carbon 6 of the heptose. The polypeptide is ADP-L-glycero-D-manno-heptose-6-epimerase (Neisseria gonorrhoeae (strain ATCC 700825 / FA 1090)).